Consider the following 260-residue polypeptide: POLG alternative reading frame (260 aa).

2 disordered regions span residues 1–50 and 108–219; these read MEPK…LRPR and ARRG…RRGG. Low complexity-rich tracts occupy residues 36–48, 116–154, and 164–186; these read AGSSSGALGLQLR, GRGAPQRRAPAEARALGAASRALARRGAAPAAPLRGQPG, and AEPALPGGGQLAVAGPAAPEAPG. Residues 104 to 130 form a required for nucleolar localization region; that stretch reads ANLRARRGDAWRGRGAPQRRAPAEARA. 2 stretches are compositionally biased toward gly residues: residues 187–199 and 209–219; these read LGLGGGLDPVRPR and RGAGPGVRRGG.

In terms of assembly, interacts with C1QBP; the interaction results in nucleolar localization of C1QBP, probably due to prevention of C1QBP maturation and redirection from mitochondria to nucleoli. Post-translationally, undergoes proteolytic cleavage to produce a secreted C-terminal fragment.

The protein localises to the nucleus. Its subcellular location is the nucleolus. It is found in the secreted. This is POLG alternative reading frame from Homo sapiens (Human).